Here is a 382-residue protein sequence, read N- to C-terminus: Succinyl-diaminopimelate desuccinylase (382 aa).

Histidine 73 contacts Zn(2+). The active site involves aspartate 75. Aspartate 106 contacts Zn(2+). Glutamate 140 acts as the Proton acceptor in catalysis. Glutamate 141, glutamate 169, and histidine 355 together coordinate Zn(2+).

The protein belongs to the peptidase M20A family. DapE subfamily. In terms of assembly, homodimer. Zn(2+) is required as a cofactor. Requires Co(2+) as cofactor.

It carries out the reaction N-succinyl-(2S,6S)-2,6-diaminopimelate + H2O = (2S,6S)-2,6-diaminopimelate + succinate. Its pathway is amino-acid biosynthesis; L-lysine biosynthesis via DAP pathway; LL-2,6-diaminopimelate from (S)-tetrahydrodipicolinate (succinylase route): step 3/3. Functionally, catalyzes the hydrolysis of N-succinyl-L,L-diaminopimelic acid (SDAP), forming succinate and LL-2,6-diaminopimelate (DAP), an intermediate involved in the bacterial biosynthesis of lysine and meso-diaminopimelic acid, an essential component of bacterial cell walls. This is Succinyl-diaminopimelate desuccinylase from Saccharophagus degradans (strain 2-40 / ATCC 43961 / DSM 17024).